We begin with the raw amino-acid sequence, 398 residues long: Spermatogenesis associated 6-like protein (398 aa).

The disordered stretch occupies residues 170-215 (KLNGPANNRKKKPKEKNSDQLSKGTPFWGPSPQRLHLHRPTQRNPG). A phosphoserine mark is found at Ser269 and Ser272.

The protein belongs to the SPATA6 family.

The chain is Spermatogenesis associated 6-like protein (Spata6l) from Rattus norvegicus (Rat).